Consider the following 333-residue polypeptide: Large ribosomal subunit protein uL3 (333 aa).

This sequence belongs to the universal ribosomal protein uL3 family. In terms of assembly, part of the 50S ribosomal subunit. Forms a cluster with proteins L14 and L24e.

Functionally, one of the primary rRNA binding proteins, it binds directly near the 3'-end of the 23S rRNA, where it nucleates assembly of the 50S subunit. This chain is Large ribosomal subunit protein uL3, found in Methanocorpusculum labreanum (strain ATCC 43576 / DSM 4855 / Z).